A 1086-amino-acid chain; its full sequence is NAD(P) transhydrogenase, mitochondrial (1086 aa).

The transit peptide at 1 to 43 (MANLLKTVVTGCSCPFLSNLGSCKVLPGKKNFLRTFHTHRILW) directs the protein to the mitochondrion. The Mitochondrial matrix portion of the chain corresponds to 44-474 (CSAPVKPGIP…TITPFRKTMT (431 aa)). An N6-acetyllysine modification is found at Lys70. Lys117 is modified (N6-succinyllysine). 182–184 (RVT) serves as a coordination point for NAD(+). Lys224 carries the post-translational modification N6-succinyllysine. NAD(+) contacts are provided by residues Val237, 257–259 (DTR), and Gly287. Lys294 carries the N6-succinyllysine modification. Residues Glu300 and Leu319 each coordinate NAD(+). Lys331 is subject to N6-succinyllysine. An N6-acetyllysine modification is found at Lys397. 4 consecutive transmembrane segments (helical) span residues 475-493 (SASV…GIAA), 501-521 (MVTT…GVTP), 527-546 (LMSV…LVLM), and 558-578 (GLAA…FLVT). Residues 579–595 (QRMLDMFKRPTDPPEYN) lie on the Mitochondrial matrix side of the membrane. The next 5 membrane-spanning stretches (helical) occupy residues 596–616 (YLYL…LYSG), 622–642 (IMYL…STQG), 646–666 (LGNA…LGGL), 672–691 (LLAQ…LTIA), and 702–722 (LVAA…IAEY). The Cytoplasmic segment spans residues 723-739 (IIEYPHFATDAAANLTK). The next 5 membrane-spanning stretches (helical) occupy residues 740 to 760 (IVAY…LVAY), 778 to 797 (HLLN…PFMM), 801 to 819 (FTTG…AVMG), 833 to 853 (VVIT…GFLL), and 857 to 879 (LLTI…MCVA). At 880–1086 (MNRSLANVIL…QAKVRESYQK (207 aa)) the chain is on the mitochondrial matrix side. NADP(+) is bound by residues Tyr933, 965 to 970 (VAGRMP), 1009 to 1011 (NDT), 1026 to 1027 (GM), 1042 to 1049 (KRSLGVGY), and 1068 to 1069 (DA). Lys1079 carries the post-translational modification N6-succinyllysine.

It in the N-terminal section; belongs to the AlaDH/PNT family. In the C-terminal section; belongs to the PNT beta subunit family. Homodimer.

The protein resides in the mitochondrion inner membrane. It carries out the reaction NAD(+) + NADPH + H(+)(in) = NADH + NADP(+) + H(+)(out). Its function is as follows. The transhydrogenation between NADH and NADP is coupled to respiration and ATP hydrolysis and functions as a proton pump across the membrane. May play a role in reactive oxygen species (ROS) detoxification in the adrenal gland. In Bos taurus (Bovine), this protein is NAD(P) transhydrogenase, mitochondrial (NNT).